The sequence spans 336 residues: Biotin synthase (336 aa).

The Radical SAM core domain maps to 55–282 (NRVQLSKLLN…QSHVRLTAGR (228 aa)). [4Fe-4S] cluster is bound by residues C70, C74, and C77. The [2Fe-2S] cluster site is built by C114, C145, C205, and R277.

This sequence belongs to the radical SAM superfamily. Biotin synthase family. As to quaternary structure, homodimer. [4Fe-4S] cluster serves as cofactor. The cofactor is [2Fe-2S] cluster.

The catalysed reaction is (4R,5S)-dethiobiotin + (sulfur carrier)-SH + 2 reduced [2Fe-2S]-[ferredoxin] + 2 S-adenosyl-L-methionine = (sulfur carrier)-H + biotin + 2 5'-deoxyadenosine + 2 L-methionine + 2 oxidized [2Fe-2S]-[ferredoxin]. The protein operates within cofactor biosynthesis; biotin biosynthesis; biotin from 7,8-diaminononanoate: step 2/2. Functionally, catalyzes the conversion of dethiobiotin (DTB) to biotin by the insertion of a sulfur atom into dethiobiotin via a radical-based mechanism. The polypeptide is Biotin synthase (Brucella anthropi (strain ATCC 49188 / DSM 6882 / CCUG 24695 / JCM 21032 / LMG 3331 / NBRC 15819 / NCTC 12168 / Alc 37) (Ochrobactrum anthropi)).